A 124-amino-acid polypeptide reads, in one-letter code: Large ribosomal subunit protein bL12 (124 aa).

This sequence belongs to the bacterial ribosomal protein bL12 family. Homodimer. Part of the ribosomal stalk of the 50S ribosomal subunit. Forms a multimeric L10(L12)X complex, where L10 forms an elongated spine to which 2 to 4 L12 dimers bind in a sequential fashion. Binds GTP-bound translation factors.

Its function is as follows. Forms part of the ribosomal stalk which helps the ribosome interact with GTP-bound translation factors. Is thus essential for accurate translation. This is Large ribosomal subunit protein bL12 from Akkermansia muciniphila (strain ATCC BAA-835 / DSM 22959 / JCM 33894 / BCRC 81048 / CCUG 64013 / CIP 107961 / Muc).